A 258-amino-acid polypeptide reads, in one-letter code: MFLKVHEIAFLFGLLGNIVSFGVFLSPVPTFYGIYKKKSSKGFQSIPYICALASATLLLYYGIMKTHAYLIISINTFGCFIEISYLFLYILYAPREAKISTLKLIVICNIGGLGLLILLVNLLVPKQHRVSTVGWVCAAYSLAVFASPLSVMRKVIKTKSVEYMPFLLSLSLTLNAVMWFFYGLLIKDKFIAMPNILGFLFGVAQMILYMMYQGSTKTDLPTENQLANKTDVNEVPIVAVELPDVGSDNVEGSVRPMK.

The Extracellular segment spans residues 1–7; the sequence is MFLKVHE. A helical transmembrane segment spans residues 8–28; sequence IAFLFGLLGNIVSFGVFLSPV. One can recognise a MtN3/slv 1 domain in the interval 10–96; that stretch reads FLFGLLGNIV…FLYILYAPRE (87 aa). Over 29–42 the chain is Cytoplasmic; that stretch reads PTFYGIYKKKSSKG. A helical transmembrane segment spans residues 43-63; that stretch reads FQSIPYICALASATLLLYYGI. The Extracellular portion of the chain corresponds to 64–69; sequence MKTHAY. A helical membrane pass occupies residues 70–90; sequence LIISINTFGCFIEISYLFLYI. The Cytoplasmic portion of the chain corresponds to 91 to 103; it reads LYAPREAKISTLK. Residues 104–124 traverse the membrane as a helical segment; that stretch reads LIVICNIGGLGLLILLVNLLV. The Extracellular portion of the chain corresponds to 125-131; that stretch reads PKQHRVS. Residues 132–152 traverse the membrane as a helical segment; it reads TVGWVCAAYSLAVFASPLSVM. The MtN3/slv 2 domain maps to 132-216; the sequence is TVGWVCAAYS…ILYMMYQGST (85 aa). Residues 153–165 are Cytoplasmic-facing; it reads RKVIKTKSVEYMP. The chain crosses the membrane as a helical span at residues 166-186; sequence FLLSLSLTLNAVMWFFYGLLI. Topologically, residues 187–189 are extracellular; the sequence is KDK. A helical membrane pass occupies residues 190–210; the sequence is FIAMPNILGFLFGVAQMILYM. At 211 to 258 the chain is on the cytoplasmic side; that stretch reads MYQGSTKTDLPTENQLANKTDVNEVPIVAVELPDVGSDNVEGSVRPMK.

The protein belongs to the SWEET sugar transporter family. Forms heterooligomers with SWEET1, SWEET5, SWEET8, SWEET11, SWEET13, SWEET16 and SWEET17. In terms of tissue distribution, specifically expressed in nectaries, mostly in the lower half of nectary parenchyma.

The protein localises to the cell membrane. The protein resides in the cytoplasmic vesicle membrane. It is found in the golgi apparatus. It localises to the trans-Golgi network membrane. In terms of biological role, mediates both low-affinity uptake and efflux of sugar across the plasma membrane. Nectary-specific sugar transporter required for nectar production by mediating the secretion of sucrose from the nectary parenchyma to the extracellular space. The sequence is that of Bidirectional sugar transporter SWEET9 from Arabidopsis thaliana (Mouse-ear cress).